The primary structure comprises 222 residues: Putative O-methyltransferase MAV_1364 (222 aa).

S-adenosyl-L-methionine contacts are provided by residues valine 49, glutamate 71, 73–74, serine 79, aspartate 97, and isoleucine 98; that span reads GT. Aspartate 145 lines the substrate pocket. An S-adenosyl-L-methionine-binding site is contributed by aspartate 147.

It belongs to the class I-like SAM-binding methyltransferase superfamily. Cation-dependent O-methyltransferase family.

In Mycobacterium avium (strain 104), this protein is Putative O-methyltransferase MAV_1364.